Here is a 920-residue protein sequence, read N- to C-terminus: Anoctamin-4 (920 aa).

At 1 to 323 the chain is on the cytoplasmic side; the sequence is METSSSGITN…LYFAWLGWYT (323 aa). A disordered region spans residues 38–64; the sequence is KDDDSLLHPGNLTSTSDDASRLEAGGE. A helical transmembrane segment spans residues 324 to 344; the sequence is GMLFPAAFIGLFVFLYGVITL. The Extracellular segment spans residues 345–389; sequence DHCQVSKEVCQATDIIMCPVCDKYCPFMRLSDSCVYAKVTHLFDN. The helical transmembrane segment at 390–410 threads the bilayer; the sequence is GATVFFAVFMAVWATVFLEFW. Over 411 to 470 the chain is Cytoplasmic; sequence KRRRAVIAYDWDLIDWEEEEEEIRPQFEAKYSKKERMNPISGKPEPYQAFADKCSRLIVS. Residues 471–491 form a helical membrane-spanning segment; that stretch reads ASGIFFMICVVIAAVFGIVIY. Over 492–512 the chain is Extracellular; that stretch reads RVVTVSTFAAFKWALIRNNSQ. Asn-509 carries N-linked (GlcNAc...) asparagine glycosylation. The chain crosses the membrane as a helical span at residues 513 to 533; the sequence is VATTGTAVCINFCIIMLLNVL. Over 534-560 the chain is Cytoplasmic; it reads YEKVALLLTNLEQPRTESEWENSFTLK. Residues 561–581 traverse the membrane as a helical segment; that stretch reads MFLFQFVNLNSSTFYIAFFLG. Residues 582 to 680 are Extracellular-facing; the sequence is RFTGHPGAYL…AYGLFDEYLE (99 aa). Residues 681–701 form a helical membrane-spanning segment; that stretch reads MILQFGFTTIFVAAFPLAPLL. The Cytoplasmic portion of the chain corresponds to 702 to 733; the sequence is ALLNNIIEIRLDAYKFVTQWRRPLASRAKDIG. The helical transmembrane segment at 734–754 threads the bilayer; the sequence is IWYGILEGIGILSVITNAFVI. The Extracellular portion of the chain corresponds to 755 to 850; sequence AITSDFIPRL…QFWHVLAARL (96 aa). N-linked (GlcNAc...) asparagine glycosylation is found at Asn-789 and Asn-802. The helical transmembrane segment at 851-871 threads the bilayer; the sequence is AFIIVFEHLVFCIKHLISYLI. The Cytoplasmic segment spans residues 872 to 920; the sequence is PDLPKDLRDRMRREKYLIQEMMYEAELERLQKERKERKKNGKAHHNEWP.

It belongs to the anoctamin family.

Its subcellular location is the cell membrane. The catalysed reaction is a 1,2-diacyl-sn-glycero-3-phospho-L-serine(in) = a 1,2-diacyl-sn-glycero-3-phospho-L-serine(out). The enzyme catalyses a beta-D-galactosyl-(1&lt;-&gt;1')-N-acylsphing-4-enine(out) = a beta-D-galactosyl-(1&lt;-&gt;1')-N-acylsphing-4-enine(in). It carries out the reaction a 1,2-diacyl-sn-glycero-3-phosphocholine(in) = a 1,2-diacyl-sn-glycero-3-phosphocholine(out). In terms of biological role, has calcium-dependent phospholipid scramblase activity; scrambles phosphatidylserine, phosphatidylcholine and galactosylceramide. Does not exhibit calcium-activated chloride channel (CaCC) activity. The chain is Anoctamin-4 from Bos taurus (Bovine).